Reading from the N-terminus, the 221-residue chain is Transcriptional regulatory protein QseB (221 aa).

Residues 2 to 116 (RILLIEDDNL…EVAARLQALI (115 aa)) form the Response regulatory domain. Residue Asp51 is modified to 4-aspartylphosphate. A DNA-binding region (ompR/PhoB-type) is located at residues 124–218 (HSVIEQAGVK…VHGVGYALGQ (95 aa)).

Phosphorylated by QseC.

The protein resides in the cytoplasm. In terms of biological role, member of a two-component regulatory system QseB/QseC. This Haemophilus influenzae (strain ATCC 51907 / DSM 11121 / KW20 / Rd) protein is Transcriptional regulatory protein QseB (qseB).